The primary structure comprises 200 residues: Recombination protein RecR (200 aa).

The segment at 57–72 (CNECRTFTEEDVCHIC) adopts a C4-type zinc-finger fold. The Toprim domain occupies 81–176 (GLLCVVESPA…DASRIAHGVP (96 aa)).

This sequence belongs to the RecR family.

Functionally, may play a role in DNA repair. It seems to be involved in an RecBC-independent recombinational process of DNA repair. It may act with RecF and RecO. In Vibrio vulnificus (strain CMCP6), this protein is Recombination protein RecR.